Reading from the N-terminus, the 426-residue chain is MFRTKRSALVRRLWRSRAPGGEDEEEGVGGGGGGGGLRGEGATDGRAYGAGGGGAGRAGCCLGKAVRGAKGHHHPHPPSSGAGAAGGAEADLKALTHSVLKKLKERQLELLLQAVESRGGTRTACLLLPGRLDCRLGPGAPASAQPAQPPSSYSLPLLLCKVFRWPDLRHSSEVKRLCCCESYGKINPELVCCNPHHLSRLCELESPPPPYSRYPMDFLKPTADCPDAVPSSDETGGTNYLAPGGLSDSQLLLEPGDRSHWCVVAYWEEKTRVGRLYCVQEPSLDIFYDLPQGNGFCLGQLNSDNKSQLVQKVRSKIGCGIQLTREVDGVWVYNRSSYPIFIKSATLDNPDSRTLLVHKVFPGFSIKAFDYEKAYSLQRPNDHEFMQQPWTGFTVQISFVKGWGQCYTRQFISSCPCWLEVIFNSR.

The interval 14–40 is disordered; the sequence is WRSRAPGGEDEEEGVGGGGGGGGLRGE. The segment covering 28–39 has biased composition (gly residues); that stretch reads VGGGGGGGGLRG. N6-acetyllysine; alternate occurs at positions 64 and 70. Glycyl lysine isopeptide (Lys-Gly) (interchain with G-Cter in ubiquitin); alternate cross-links involve residues lysine 64 and lysine 70. One can recognise an MH1 domain in the interval 64 to 207; the sequence is KAVRGAKGHH…LSRLCELESP (144 aa). Residues 67–76 show a composition bias toward basic residues; that stretch reads RGAKGHHHPH. Residues 67–88 are disordered; it reads RGAKGHHHPHPPSSGAGAAGGA. 4 residues coordinate Zn(2+): cysteine 125, cysteine 180, cysteine 192, and histidine 197. Residues 208-211 carry the PY-motif motif; the sequence is PPPY. The interval 208 to 217 is important for interaction with SMURF2; sequence PPPYSRYPMD. The residue at position 249 (serine 249) is a Phosphoserine. The 166-residue stretch at 261-426 folds into the MH2 domain; the sequence is WCVVAYWEEK…CWLEVIFNSR (166 aa).

It belongs to the dwarfin/SMAD family. In terms of assembly, interacts with COPS5. Interacts with STAMBP. Interacts with NEDD4L. Interacts with RNF111, AXIN1 and AXIN2. Interacts with PPP1R15A. Interacts with ACVR1B, SMURF1, SMURF2 and TGFBR1; SMAD7 recruits SMURF1 and SMURF2 to the TGF-beta receptor and regulates its degradation. Interacts with WWP1. Interacts with PDPK1 (via PH domain). Interacts with TSC22D1/TSC-22; the interaction requires TGF-beta and the interaction is inhibited by TGFBR1. Phosphorylation on Ser-249 does not affect its stability, nuclear localization or inhibitory function in TGFB signaling; however it affects its ability to regulate transcription. Phosphorylated by PDPK1. In terms of processing, ubiquitinated by WWP1. Polyubiquitinated by RNF111, which is enhanced by AXIN1 and promotes proteasomal degradation. In response to TGF-beta, ubiquitinated by SMURF1; which promotes its degradation. Post-translationally, acetylation prevents ubiquitination and degradation mediated by SMURF1. In terms of tissue distribution, ubiquitous.

It localises to the nucleus. The protein resides in the cytoplasm. In terms of biological role, antagonist of signaling by TGF-beta (transforming growth factor) type 1 receptor superfamily members; has been shown to inhibit TGF-beta (Transforming growth factor) and activin signaling by associating with their receptors thus preventing SMAD2 access. Functions as an adapter to recruit SMURF2 to the TGF-beta receptor complex. Also acts by recruiting the PPP1R15A-PP1 complex to TGFBR1, which promotes its dephosphorylation. Positively regulates PDPK1 kinase activity by stimulating its dissociation from the 14-3-3 protein YWHAQ which acts as a negative regulator. In Rattus norvegicus (Rat), this protein is Mothers against decapentaplegic homolog 7 (Smad7).